We begin with the raw amino-acid sequence, 336 residues long: Probable GTPase MT1543 (336 aa).

GTP is bound by residues 67–75 (GVPGVGKST), Asp-209, and 245–247 (SAV).

This sequence belongs to the SIMIBI class G3E GTPase family. ArgK/MeaB subfamily. In terms of assembly, homodimer.

Functionally, probable GTPase. May also bind and hydrolyze ATP. May function as chaperone. In Mycobacterium tuberculosis (strain CDC 1551 / Oshkosh), this protein is Probable GTPase MT1543.